The primary structure comprises 544 residues: Chaperonin GroEL (544 aa).

ATP-binding positions include 29–32, 86–90, Gly-413, 476–478, and Asp-492; these read TLGP, DGTTT, and NAA.

This sequence belongs to the chaperonin (HSP60) family. In terms of assembly, forms a cylinder of 14 subunits composed of two heptameric rings stacked back-to-back. Interacts with the co-chaperonin GroES.

It localises to the cytoplasm. It catalyses the reaction ATP + H2O + a folded polypeptide = ADP + phosphate + an unfolded polypeptide.. In terms of biological role, together with its co-chaperonin GroES, plays an essential role in assisting protein folding. The GroEL-GroES system forms a nano-cage that allows encapsulation of the non-native substrate proteins and provides a physical environment optimized to promote and accelerate protein folding. The chain is Chaperonin GroEL from Halalkalibacterium halodurans (strain ATCC BAA-125 / DSM 18197 / FERM 7344 / JCM 9153 / C-125) (Bacillus halodurans).